The chain runs to 181 residues: Large ribosomal subunit protein uL5 (181 aa).

It belongs to the universal ribosomal protein uL5 family. Part of the 50S ribosomal subunit; part of the 5S rRNA/L5/L18/L25 subcomplex. Contacts the 5S rRNA and the P site tRNA. Forms a bridge to the 30S subunit in the 70S ribosome.

Its function is as follows. This is one of the proteins that bind and probably mediate the attachment of the 5S RNA into the large ribosomal subunit, where it forms part of the central protuberance. In the 70S ribosome it contacts protein S13 of the 30S subunit (bridge B1b), connecting the 2 subunits; this bridge is implicated in subunit movement. Contacts the P site tRNA; the 5S rRNA and some of its associated proteins might help stabilize positioning of ribosome-bound tRNAs. The protein is Large ribosomal subunit protein uL5 of Campylobacter hominis (strain ATCC BAA-381 / DSM 21671 / CCUG 45161 / LMG 19568 / NCTC 13146 / CH001A).